The following is a 166-amino-acid chain: Large ribosomal subunit protein uL10 (166 aa).

This sequence belongs to the universal ribosomal protein uL10 family. As to quaternary structure, part of the ribosomal stalk of the 50S ribosomal subunit. The N-terminus interacts with L11 and the large rRNA to form the base of the stalk. The C-terminus forms an elongated spine to which L12 dimers bind in a sequential fashion forming a multimeric L10(L12)X complex.

Functionally, forms part of the ribosomal stalk, playing a central role in the interaction of the ribosome with GTP-bound translation factors. The protein is Large ribosomal subunit protein uL10 of Ureaplasma parvum serovar 3 (strain ATCC 27815 / 27 / NCTC 11736).